Reading from the N-terminus, the 351-residue chain is Cyanuric acid amidohydrolase (351 aa).

Residues 1–96 (MPSLRAHVFR…HWTVFARETV (96 aa)) form an RU A region. Substrate-binding positions include Arg53 and 77-78 (SG). The interval 103-240 (ALAIGVSRTP…HEIIVLGMSA (138 aa)) is RU B. Lys153 is an active-site residue. Residues Arg185 and 223–224 (SS) contribute to the substrate site. Residue Ser223 is the Nucleophile of the active site. The segment at 246–351 (LSIDHAVMRD…PVAIIVEKEQ (106 aa)) is RU C. Glu283 is a Mg(2+) binding site. Residues Arg310 and 329-330 (SG) each bind substrate. Mg(2+)-binding residues include Ala332, Gln335, Gly336, Pro337, and Gly340.

This sequence belongs to the cyclic amide hydrolase (CyAH) family. In terms of assembly, homotetramer.

The enzyme catalyses cyanurate + H2O = 1-carboxybiuret + H(+). It participates in xenobiotic degradation; atrazine degradation; biuret from cyanurate: step 1/1. Inhibited by barbituric acid. Functionally, responsible for the hydrolysis of cyanuric acid, an intermediate formed during catabolism of s-triazine based compounds in herbicides such as atrazine and polymers such as melamine. Catalyzes the hydrolytic opening of the s-triazine ring of cyanuric acid (2,4,6-trihydroxy-s-triazine) to yield carbon dioxide and carboxybiuret, which spontaneously decarboxylates to biuret. This Rhizobium johnstonii (strain DSM 114642 / LMG 32736 / 3841) (Rhizobium leguminosarum bv. viciae) protein is Cyanuric acid amidohydrolase.